A 688-amino-acid polypeptide reads, in one-letter code: Elongation factor G (688 aa).

A tr-type G domain is found at Glu8 to Leu282. GTP is bound by residues Ala17 to Thr24, Asp81 to His85, and Asn135 to Asp138.

This sequence belongs to the TRAFAC class translation factor GTPase superfamily. Classic translation factor GTPase family. EF-G/EF-2 subfamily.

The protein resides in the cytoplasm. Catalyzes the GTP-dependent ribosomal translocation step during translation elongation. During this step, the ribosome changes from the pre-translocational (PRE) to the post-translocational (POST) state as the newly formed A-site-bound peptidyl-tRNA and P-site-bound deacylated tRNA move to the P and E sites, respectively. Catalyzes the coordinated movement of the two tRNA molecules, the mRNA and conformational changes in the ribosome. In Clostridium perfringens (strain 13 / Type A), this protein is Elongation factor G.